Here is a 216-residue protein sequence, read N- to C-terminus: MARSKTSLKWLQEHFNDPYVKKAQKDGYRSRASYKLLEIQDKDKLIRPGMSVIDLGAAPGGWSQVTSRLIGGQGRLIASDILEMDSIPDVTFVHGDFTQDTVLAQILEAVGNSQVDLVISDMAPNMSGLPAVDMPRAMFLCELALDLAGRVLRPGGDFLVKVFQGEGFDEYHKNIRKLFDKVQTRKPDSSRDRSREQYLLCRGFRGVEGAASEERF.

S-adenosyl-L-methionine-binding residues include glycine 60, tryptophan 62, aspartate 80, aspartate 96, and aspartate 121. Catalysis depends on lysine 161, which acts as the Proton acceptor.

This sequence belongs to the class I-like SAM-binding methyltransferase superfamily. RNA methyltransferase RlmE family.

Its subcellular location is the cytoplasm. The enzyme catalyses uridine(2552) in 23S rRNA + S-adenosyl-L-methionine = 2'-O-methyluridine(2552) in 23S rRNA + S-adenosyl-L-homocysteine + H(+). Its function is as follows. Specifically methylates the uridine in position 2552 of 23S rRNA at the 2'-O position of the ribose in the fully assembled 50S ribosomal subunit. The sequence is that of Ribosomal RNA large subunit methyltransferase E from Pseudomonas fluorescens (strain SBW25).